The sequence spans 464 residues: Soluble pyridine nucleotide transhydrogenase (464 aa).

FAD is bound at residue 35–44 (DSRRQVGGNC).

This sequence belongs to the class-I pyridine nucleotide-disulfide oxidoreductase family. FAD is required as a cofactor.

The protein resides in the cytoplasm. The catalysed reaction is NAD(+) + NADPH = NADH + NADP(+). Functionally, conversion of NADPH, generated by peripheral catabolic pathways, to NADH, which can enter the respiratory chain for energy generation. This chain is Soluble pyridine nucleotide transhydrogenase, found in Pseudomonas entomophila (strain L48).